The sequence spans 305 residues: Glycine--tRNA ligase alpha subunit (305 aa).

This sequence belongs to the class-II aminoacyl-tRNA synthetase family. Tetramer of two alpha and two beta subunits.

Its subcellular location is the cytoplasm. It catalyses the reaction tRNA(Gly) + glycine + ATP = glycyl-tRNA(Gly) + AMP + diphosphate. This is Glycine--tRNA ligase alpha subunit (glyQ) from Vibrio cholerae serotype O1 (strain ATCC 39315 / El Tor Inaba N16961).